Here is a 226-residue protein sequence, read N- to C-terminus: 3-dehydroquinate dehydratase (226 aa).

3-dehydroquinate-binding positions include 29-31 (EFR) and arginine 56. The active-site Proton donor/acceptor is histidine 120. Lysine 146 acts as the Schiff-base intermediate with substrate in catalysis. 3-dehydroquinate contacts are provided by arginine 187, threonine 208, and glutamine 212.

The protein belongs to the type-I 3-dehydroquinase family. Homodimer.

The catalysed reaction is 3-dehydroquinate = 3-dehydroshikimate + H2O. It participates in metabolic intermediate biosynthesis; chorismate biosynthesis; chorismate from D-erythrose 4-phosphate and phosphoenolpyruvate: step 3/7. Its function is as follows. Involved in the third step of the chorismate pathway, which leads to the biosynthesis of aromatic amino acids. Catalyzes the cis-dehydration of 3-dehydroquinate (DHQ) and introduces the first double bond of the aromatic ring to yield 3-dehydroshikimate. In Halobacterium salinarum (strain ATCC 700922 / JCM 11081 / NRC-1) (Halobacterium halobium), this protein is 3-dehydroquinate dehydratase.